Reading from the N-terminus, the 482-residue chain is NADH-quinone oxidoreductase subunit N (482 aa).

14 helical membrane passes run 11 to 31 (AVPE…GVFI), 37 to 57 (IPYY…WYIF), 77 to 97 (RFSV…FIYA), 106 to 126 (IPHT…VALV), 131 to 151 (LLTV…MVAL), 166 to 186 (FVIG…IFGA), 208 to 228 (LILV…LGTA), 255 to 275 (IAAY…LHVQ), 279 to 299 (MLIV…IVQS), 304 to 324 (MLAY…LCGT), 332 to 352 (MFYT…VVLM), 376 to 396 (AFMM…VGFI), 404 to 424 (ALIQ…AIVG), and 462 to 482 (LAVL…HLAF).

It belongs to the complex I subunit 2 family. As to quaternary structure, NDH-1 is composed of 14 different subunits. Subunits NuoA, H, J, K, L, M, N constitute the membrane sector of the complex.

The protein resides in the cell inner membrane. The catalysed reaction is a quinone + NADH + 5 H(+)(in) = a quinol + NAD(+) + 4 H(+)(out). In terms of biological role, NDH-1 shuttles electrons from NADH, via FMN and iron-sulfur (Fe-S) centers, to quinones in the respiratory chain. The immediate electron acceptor for the enzyme in this species is believed to be ubiquinone. Couples the redox reaction to proton translocation (for every two electrons transferred, four hydrogen ions are translocated across the cytoplasmic membrane), and thus conserves the redox energy in a proton gradient. The polypeptide is NADH-quinone oxidoreductase subunit N (Coxiella burnetii (strain RSA 493 / Nine Mile phase I)).